We begin with the raw amino-acid sequence, 212 residues long: Phosphatidylserine decarboxylase proenzyme (212 aa).

Ser-182 (schiff-base intermediate with substrate; via pyruvic acid) is an active-site residue. Pyruvic acid (Ser); by autocatalysis is present on Ser-182.

The protein belongs to the phosphatidylserine decarboxylase family. PSD-A subfamily. As to quaternary structure, heterodimer of a large membrane-associated beta subunit and a small pyruvoyl-containing alpha subunit. Pyruvate serves as cofactor. Is synthesized initially as an inactive proenzyme. Formation of the active enzyme involves a self-maturation process in which the active site pyruvoyl group is generated from an internal serine residue via an autocatalytic post-translational modification. Two non-identical subunits are generated from the proenzyme in this reaction, and the pyruvate is formed at the N-terminus of the alpha chain, which is derived from the carboxyl end of the proenzyme. The post-translation cleavage follows an unusual pathway, termed non-hydrolytic serinolysis, in which the side chain hydroxyl group of the serine supplies its oxygen atom to form the C-terminus of the beta chain, while the remainder of the serine residue undergoes an oxidative deamination to produce ammonia and the pyruvoyl prosthetic group on the alpha chain.

It localises to the cell membrane. It carries out the reaction a 1,2-diacyl-sn-glycero-3-phospho-L-serine + H(+) = a 1,2-diacyl-sn-glycero-3-phosphoethanolamine + CO2. It participates in phospholipid metabolism; phosphatidylethanolamine biosynthesis; phosphatidylethanolamine from CDP-diacylglycerol: step 2/2. In terms of biological role, catalyzes the formation of phosphatidylethanolamine (PtdEtn) from phosphatidylserine (PtdSer). This is Phosphatidylserine decarboxylase proenzyme from Chlorobium limicola (strain DSM 245 / NBRC 103803 / 6330).